The primary structure comprises 180 residues: Acireductone dioxygenase (180 aa).

Fe(2+) is bound by residues histidine 97, histidine 99, glutamate 103, and histidine 141. The Ni(2+) site is built by histidine 97, histidine 99, glutamate 103, and histidine 141.

Belongs to the acireductone dioxygenase (ARD) family. In terms of assembly, monomer. The cofactor is Fe(2+). Requires Ni(2+) as cofactor.

The enzyme catalyses 1,2-dihydroxy-5-(methylsulfanyl)pent-1-en-3-one + O2 = 3-(methylsulfanyl)propanoate + CO + formate + 2 H(+). The catalysed reaction is 1,2-dihydroxy-5-(methylsulfanyl)pent-1-en-3-one + O2 = 4-methylsulfanyl-2-oxobutanoate + formate + 2 H(+). Its pathway is amino-acid biosynthesis; L-methionine biosynthesis via salvage pathway; L-methionine from S-methyl-5-thio-alpha-D-ribose 1-phosphate: step 5/6. Its function is as follows. Catalyzes 2 different reactions between oxygen and the acireductone 1,2-dihydroxy-3-keto-5-methylthiopentene (DHK-MTPene) depending upon the metal bound in the active site. Fe-containing acireductone dioxygenase (Fe-ARD) produces formate and 2-keto-4-methylthiobutyrate (KMTB), the alpha-ketoacid precursor of methionine in the methionine recycle pathway. Ni-containing acireductone dioxygenase (Ni-ARD) produces methylthiopropionate, carbon monoxide and formate, and does not lie on the methionine recycle pathway. The polypeptide is Acireductone dioxygenase (Cronobacter sakazakii (strain ATCC BAA-894) (Enterobacter sakazakii)).